We begin with the raw amino-acid sequence, 1765 residues long: Sodium channel protein type 11 subunit alpha (1765 aa).

Over 1–126 (MEERYYPVIF…PLRSLMIRIS (126 aa)) the chain is Cytoplasmic. The stretch at 115 to 403 (FNPLRSLMIR…VTMAYEEQNR (289 aa)) is one I repeat. A helical transmembrane segment spans residues 127–148 (VHSVFSMFIICTVIINCMFMAN). Residues 149–157 (SMERSFDND) lie on the Extracellular side of the membrane. A helical transmembrane segment spans residues 158–177 (IPEYVFIGIYILEAVIKILA). The Cytoplasmic segment spans residues 178-189 (RGFIVDEFSFLR). Residues 190 to 209 (DPWNWLDFIVIGTAIATCFP) form a helical membrane-spanning segment. The Extracellular segment spans residues 210–216 (GSQVNLS). N214 carries an N-linked (GlcNAc...) asparagine glycan. The chain crosses the membrane as a helical; Voltage-sensor span at residues 217-236 (ALRTFRVFRALKAISVISGL). Over 237 to 252 (KVIVGALLRSVKKLVD) the chain is Cytoplasmic. Residues 253–266 (VMVLTLFCLSIFAL) traverse the membrane as a helical segment. The Extracellular portion of the chain corresponds to 267–339 (VGQQLFMGIL…PDNNYTKFDN (73 aa)). C280 and C317 form a disulfide bridge. Residues N319 and N333 are each glycosylated (N-linked (GlcNAc...) asparagine). An intramembrane region (pore-forming) is located at residues 340-364 (FGWSFLAMFRVMTQDSWERLYRQIL). At 365-371 (RTSGIYF) the chain is on the extracellular side. Residues 372–397 (VFFFVVVIFLGSFYLLNLTLAVVTMA) form a helical membrane-spanning segment. The Cytoplasmic portion of the chain corresponds to 398-567 (YEEQNRNVAA…WLCIKKVLRT (170 aa)). Residues 554 to 820 (CSPQWLCIKK…EGETRKTKVQ (267 aa)) form an II repeat. The helical transmembrane segment at 568–591 (IMTDPFTELAITICIIINTVFLAV) threads the bilayer. Topologically, residues 592–602 (EHHNMDDNLKT) are extracellular. Residues 603 to 626 (ILKIGNWVFTGIFIAEMCLKIIAL) traverse the membrane as a helical segment. The Cytoplasmic portion of the chain corresponds to 627–634 (DPYHYFRH). A helical transmembrane segment spans residues 635–656 (GWNVFDSIVALLSLADVLYNTL). Residues 657–662 (SDNNRS) lie on the Extracellular side of the membrane. Residue N660 is glycosylated (N-linked (GlcNAc...) asparagine). Residues 663-682 (FLASLRVLRVFKLAKSWPTL) form a helical; Voltage-sensor membrane-spanning segment. At 683 to 697 (NTLIKIIGHSVGALG) the chain is on the cytoplasmic side. Residues 698-720 (NLTVVLTIVVFIFSVVGMRLFGT) form a helical membrane-spanning segment. The Extracellular segment spans residues 721 to 741 (KFNKTAYATQERPRRRWHMDN). The N-linked (GlcNAc...) asparagine glycan is linked to N723. The segment at residues 742–762 (FYHSFLVVFRILCGEWIENMW) is an intramembrane region (pore-forming). Residues 763–772 (GCMQDMDGSP) are Extracellular-facing. C764 and C774 are disulfide-bonded. A helical transmembrane segment spans residues 773-798 (LCIIVFVLIMVIGKLVVLNLFIALLL). Residues 799-1029 (NSFSNEEKDG…WWNIRKTCYQ (231 aa)) lie on the Cytoplasmic side of the membrane. An III repeat occupies 1022-1319 (NIRKTCYQIV…KKYYNAMKKL (298 aa)). The chain crosses the membrane as a helical span at residues 1030 to 1052 (IVKHSWFESFIIFVILLSSGALI). The Extracellular segment spans residues 1053 to 1066 (FEDVNLPSRPQVEK). Residues 1067 to 1092 (LLRCTDNIFTFIFLLEMILKWVAFGF) form a helical membrane-spanning segment. Residues 1093–1098 (RRYFTS) lie on the Cytoplasmic side of the membrane. Residues 1099 to 1116 (AWCWLDFLIVVVSVLSLM) traverse the membrane as a helical segment. Position 1117 (N1117) is a topological domain, extracellular. Residues 1118-1139 (LPSLKSFRTLRALRPLRALSQF) form a helical; Voltage-sensor membrane-spanning segment. Over 1140 to 1158 (EGMKVVVYALISAIPAILN) the chain is Cytoplasmic. Residues 1159 to 1180 (VLLVCLIFWLVFCILGVNLFSG) form a helical membrane-spanning segment. At 1181-1223 (KFGRCINGTDINMYLDFTEVPNRSQCNISNYSWKVPQVNFDNV) the chain is on the extracellular side. N-linked (GlcNAc...) asparagine glycans are attached at residues N1187, N1202, N1207, and N1210. An intramembrane region (pore-forming) is located at residues 1224-1245 (GNAYLALLQVATYKGWLEIMNA). The Extracellular segment spans residues 1246–1261 (AVDSREKDEQPDFEAN). Residues 1262–1288 (LYAYLYFVVFIIFGSFFTLNLFIGVII) traverse the membrane as a helical segment. Topologically, residues 1289-1341 (DNFNQQQKKLGGQDIFMTEEQKKYYNAMKKLGTKKPQKPIPRPLNKCQAFVFD) are cytoplasmic. Residues 1328–1619 (IPRPLNKCQA…WEKFDPEASQ (292 aa)) form an IV repeat. The helical transmembrane segment at 1342 to 1365 (LVTSQVFDVIILGLIVLNMIIMMA) threads the bilayer. Topologically, residues 1366-1376 (ESADQPKDVKK) are extracellular. The chain crosses the membrane as a helical span at residues 1377 to 1400 (TFDILNIAFVVIFTIECLIKVFAL). Topologically, residues 1401–1406 (RQHYFT) are cytoplasmic. A helical membrane pass occupies residues 1407–1430 (NGWNLFDCVVVVLSIISTLVSRLE). The Extracellular segment spans residues 1431–1440 (DSDISFPPTL). A helical; Voltage-sensor membrane pass occupies residues 1441–1463 (FRVVRLARIGRILRLVRAARGIR). Over 1464–1478 (TLLFALMMSLPSLFN) the chain is Cytoplasmic. Residues 1479 to 1501 (IGLLLFLVMFIYAIFGMSWFSKV) form a helical membrane-spanning segment. Topologically, residues 1502 to 1515 (KKGSGIDDIFNFET) are extracellular. Residues 1516–1538 (FTGSMLCLFQITTSAGWDTLLNP) constitute an intramembrane region (pore-forming). Topologically, residues 1539-1559 (MLEAKEHCNSSSQDSCQQPQI) are extracellular. A glycan (N-linked (GlcNAc...) asparagine) is linked at N1547. A helical transmembrane segment spans residues 1560–1584 (AVVYFVSYIIISFLIVVNMYIAVIL). The Cytoplasmic segment spans residues 1585-1765 (ENFNTATEES…DVAKVKVHND (181 aa)).

The protein belongs to the sodium channel (TC 1.A.1.10) family. Nav1.9/SCN11A subfamily. In terms of assembly, the voltage-resistant sodium channel consists of an ion conducting pore forming alpha-subunit regulated by one or more auxiliary subunits SCN1B, SCN2B and SCN3B. Expressed (at protein level) in myenteric sensory neurons. Expressed in small sensory neurons of the dorsal root ganglia (C-fiber neurons) and trigeminal ganglia.

Its subcellular location is the cell membrane. The enzyme catalyses Na(+)(in) = Na(+)(out). With respect to regulation, activity is not sensitive to inhibition by tetrodotoxin. Its function is as follows. Sodium channel mediating the voltage-dependent sodium ion permeability of excitable membranes. Assuming opened or closed conformations in response to the voltage difference across the membrane, the protein forms a sodium-selective channel through which sodium ions may pass in accordance with their electrochemical gradient. Involved in membrane depolarization during action potential in nociceptors which function as key relay stations for the electrical transmission of pain signals from the periphery to the central nervous system. Also involved in rapid BDNF-evoked neuronal depolarization. The chain is Sodium channel protein type 11 subunit alpha from Rattus norvegicus (Rat).